The sequence spans 156 residues: Arginine repressor (156 aa).

It belongs to the ArgR family.

It is found in the cytoplasm. Its pathway is amino-acid biosynthesis; L-arginine biosynthesis [regulation]. Its function is as follows. Regulates arginine biosynthesis genes. The chain is Arginine repressor from Shewanella halifaxensis (strain HAW-EB4).